The chain runs to 125 residues: Small ribosomal subunit protein uS12c (125 aa).

The protein belongs to the universal ribosomal protein uS12 family. As to quaternary structure, part of the 30S ribosomal subunit.

Its subcellular location is the plastid. It is found in the chloroplast. In terms of biological role, with S4 and S5 plays an important role in translational accuracy. Located at the interface of the 30S and 50S subunits. This chain is Small ribosomal subunit protein uS12c (rps12), found in Oltmannsiellopsis viridis (Marine flagellate).